Reading from the N-terminus, the 588-residue chain is Probable G-protein coupled receptor 162 (588 aa).

Topologically, residues 1–17 are extracellular; the sequence is MARGGAGAEEASLRSNA. The chain crosses the membrane as a helical span at residues 18–38; that stretch reads LSWLACGLLALLANAWIILSI. Residues 39–49 lie on the Cytoplasmic side of the membrane; it reads SAKQQKHKPLE. Residues 50–70 form a helical membrane-spanning segment; that stretch reads LLLCFLAGTHILMAAVPLTTF. Topologically, residues 71–91 are extracellular; sequence AVVQLRRQASSDYDWNESICK. A glycan (N-linked (GlcNAc...) asparagine) is linked at asparagine 86. Residues 92 to 112 form a helical membrane-spanning segment; that stretch reads VFVSTYYTLALATCFTVASLS. Topologically, residues 113-133 are cytoplasmic; it reads YHRMWMVRWPVNYRLSNAKKQ. A helical membrane pass occupies residues 134-154; the sequence is ALHAVMGIWMVSFILSTLPSI. At 155-174 the chain is on the extracellular side; it reads GWHNNGERYYARGCQFIVSK. A helical membrane pass occupies residues 175-195; that stretch reads IGLGFGVCFSLLLLGGIVMGL. The Cytoplasmic segment spans residues 196-275; that stretch reads VCVAITFYQT…SLQVTNLVSA (80 aa). Residues 276–296 form a helical membrane-spanning segment; sequence IVFLYDSLTGVPILVVSFFSL. Topologically, residues 297 to 303 are extracellular; that stretch reads KSDSAPP. A helical membrane pass occupies residues 304 to 324; the sequence is WMVLAVLWCSMAQTLLLPSFI. Residues 325 to 588 lie on the Cytoplasmic side of the membrane; it reads WSCERYRADV…GNPIFPQLTL (264 aa). Phosphoserine occurs at positions 413 and 435. 2 disordered regions span residues 445–474 and 511–550; these read QSRA…AEGG and ETPL…AVGL. Residues 530–546 are compositionally biased toward low complexity; that stretch reads PLGLSPRRLSLGSPESR.

The protein belongs to the G-protein coupled receptor 1 family.

The protein localises to the cell membrane. Its function is as follows. Orphan receptor. The sequence is that of Probable G-protein coupled receptor 162 (GPR162) from Homo sapiens (Human).